A 636-amino-acid polypeptide reads, in one-letter code: Putative cysteine-rich receptor-like protein kinase 33 (636 aa).

The N-terminal stretch at 1 to 25 (MRKTKKISFLIFWVVLISIIGAISS) is a signal peptide. 2 consecutive Gnk2-homologous domains span residues 26–128 (QQCN…NSSF) and 138–245 (YMEH…LYPF). Topologically, residues 26–266 (QQCNETGYFE…PGSKRNISVG (241 aa)) are extracellular. 10 N-linked (GlcNAc...) asparagine glycosylation sites follow: N29, N63, N105, N125, N149, N173, N185, N188, N250, and N262. A helical membrane pass occupies residues 267–287 (FFVAIVVATGVVISVLSTLVV). The Cytoplasmic portion of the chain corresponds to 288-636 (VLVCRKRKTD…DSLIDDLVPR (349 aa)). Residues 321–600 (FSKCNMLGQG…MMLTSNSITL (280 aa)) form the Protein kinase domain. ATP is bound by residues 327 to 335 (LGQGGFGEV) and K349. Position 394 is a phosphotyrosine (Y394). D446 serves as the catalytic Proton acceptor. Position 450 is a phosphoserine (S450). Residue T486 is modified to Phosphothreonine. Position 494 is a phosphotyrosine (Y494).

This sequence belongs to the protein kinase superfamily. Ser/Thr protein kinase family. CRK subfamily.

The protein localises to the membrane. The enzyme catalyses L-seryl-[protein] + ATP = O-phospho-L-seryl-[protein] + ADP + H(+). It carries out the reaction L-threonyl-[protein] + ATP = O-phospho-L-threonyl-[protein] + ADP + H(+). This chain is Putative cysteine-rich receptor-like protein kinase 33 (CRK33), found in Arabidopsis thaliana (Mouse-ear cress).